Consider the following 263-residue polypeptide: Phosphatidylglycerol--prolipoprotein diacylglyceryl transferase (263 aa).

4 consecutive transmembrane segments (helical) span residues 15-35, 52-72, 83-103, and 112-132; these read ISIH…VYLA, FILL…VIFQ, IFAI…GAAV, and AIAV…AQSI. Arg134 contacts a 1,2-diacyl-sn-glycero-3-phospho-(1'-sn-glycerol). Helical transmembrane passes span 170–190, 200–220, and 227–247; these read VPTF…ILGL, GDVT…IEGM, and FVGL…GAVL.

Belongs to the Lgt family.

Its subcellular location is the cell membrane. The enzyme catalyses L-cysteinyl-[prolipoprotein] + a 1,2-diacyl-sn-glycero-3-phospho-(1'-sn-glycerol) = an S-1,2-diacyl-sn-glyceryl-L-cysteinyl-[prolipoprotein] + sn-glycerol 1-phosphate + H(+). The protein operates within protein modification; lipoprotein biosynthesis (diacylglyceryl transfer). Its function is as follows. Catalyzes the transfer of the diacylglyceryl group from phosphatidylglycerol to the sulfhydryl group of the N-terminal cysteine of a prolipoprotein, the first step in the formation of mature lipoproteins. The chain is Phosphatidylglycerol--prolipoprotein diacylglyceryl transferase from Streptococcus thermophilus (strain ATCC BAA-491 / LMD-9).